A 342-amino-acid polypeptide reads, in one-letter code: N-acetyl-gamma-glutamyl-phosphate reductase (342 aa).

Cys-149 is a catalytic residue.

It belongs to the NAGSA dehydrogenase family. Type 1 subfamily.

It is found in the cytoplasm. It catalyses the reaction N-acetyl-L-glutamate 5-semialdehyde + phosphate + NADP(+) = N-acetyl-L-glutamyl 5-phosphate + NADPH + H(+). It functions in the pathway amino-acid biosynthesis; L-arginine biosynthesis; N(2)-acetyl-L-ornithine from L-glutamate: step 3/4. Functionally, catalyzes the NADPH-dependent reduction of N-acetyl-5-glutamyl phosphate to yield N-acetyl-L-glutamate 5-semialdehyde. This Aromatoleum aromaticum (strain DSM 19018 / LMG 30748 / EbN1) (Azoarcus sp. (strain EbN1)) protein is N-acetyl-gamma-glutamyl-phosphate reductase.